The following is a 479-amino-acid chain: mRNA export factor ICP27 homolog (479 aa).

A compositionally biased stretch (low complexity) spans 1-15; that stretch reads MVPSQRLSRTSSISS. Disordered stretches follow at residues 1–78 and 92–210; these read MVPS…SSVV and KWDL…NKPW. A compositionally biased stretch (acidic residues) spans 35-44; sequence TDCDMDPMEG. The segment covering 132-142 has biased composition (basic and acidic residues); that stretch reads EVHGCTDESYG. Residues C354, H445, C449, and C454 each contribute to the Zn(2+) site. The CHC2-type zinc-finger motif lies at 354–454; sequence CFLPNTRDYN…HTRDCRSASC (101 aa).

It belongs to the HHV-1 ICP27 protein family. As to quaternary structure, interacts with host XPO1 and with the XPO1 export pathway components small GTPase RAN and nucleoporin NUP214. Interacts with host SPEN, OTT1 and OTT3. Interacts with host SRSF1, SRSF3, SRSF7 and SRPK1. Interacts with host DHX9; this interaction may have an inhibitory effect on virion production. Interacts (via N-terminus) with host NXF1; this interaction plays a role in mRNA export. Post-translationally, phosphorylated by cellular protein kinase CK2.

The protein localises to the host nucleus. It localises to the host cytoplasm. Functionally, promotes the nuclear export of a subset of early and late viral mRNAs by interacting with mRNAs and cellular export proteins. Additionally may prevent the establishment of cellular antiviral state, by acting as an alternative splicing factor for cellular RNAs such as STAT1, resulting in a STAT1 mRNA incapable of producing the STAT1alpha isoform. This Homo sapiens (Human) protein is mRNA export factor ICP27 homolog.